A 648-amino-acid polypeptide reads, in one-letter code: Beta-glucuronidase (648 aa).

A signal peptide spans Met1 to Ala22. Asn172 and Asn416 each carry an N-linked (GlcNAc...) asparagine glycan. The active-site Proton donor is Glu447. N-linked (GlcNAc...) asparagine glycosylation is present at Asn627.

It belongs to the glycosyl hydrolase 2 family. As to quaternary structure, homotetramer.

The protein resides in the lysosome. It localises to the endoplasmic reticulum. The catalysed reaction is a beta-D-glucuronoside + H2O = D-glucuronate + an alcohol. Its activity is regulated as follows. Inhibited by L-aspartic acid. Plays an important role in the degradation of dermatan and keratan sulfates. In Mus musculus (Mouse), this protein is Beta-glucuronidase (Gusb).